We begin with the raw amino-acid sequence, 397 residues long: Glycine betaine/carnitine transport ATP-binding protein GbuA (397 aa).

Positions 28 to 264 (KSKTDILKET…PANEYVEKFI (237 aa)) constitute an ABC transporter domain. Residue 60-67 (GLSGSGKS) participates in ATP binding. 2 consecutive CBS domains span residues 279-335 (MIRP…NITS) and 340-395 (LHRD…EVNV).

The protein belongs to the ABC transporter superfamily. In terms of assembly, the complex is composed of two ATP-binding proteins (GbuA), two transmembrane proteins (GbuB) and a solute-binding protein (GbuC).

It carries out the reaction a quaternary ammonium(out) + ATP + H2O = a quaternary ammonium(in) + ADP + phosphate + H(+). The complex is activated by an osmotic gradient or by low temperature. Part of the ABC transporter complex GbuABC involved in glycine betaine uptake. Responsible for energy coupling to the transport system. Involved, with BetL and OpuC, in osmoprotection and cryoprotection of Listeria. Can also uptake carnitine when carnitine is abundant in the growth medium. This is Glycine betaine/carnitine transport ATP-binding protein GbuA (gbuA) from Listeria monocytogenes serotype 1/2a (strain 10403S).